A 350-amino-acid chain; its full sequence is [LysW]-L-2-aminoadipate/[LysW]-L-glutamate phosphate reductase (350 aa).

10–13 serves as a coordination point for NADP(+); the sequence is SGYT. Residue C150 is part of the active site. An NADP(+)-binding site is contributed by N317.

It belongs to the NAGSA dehydrogenase family. Type 1 subfamily. LysY sub-subfamily.

The protein localises to the cytoplasm. The catalysed reaction is [amino-group carrier protein]-C-terminal-N-(1-carboxy-5-oxopentan-1-yl)-L-glutamine + phosphate + NADP(+) = [amino-group carrier protein]-C-terminal-N-(1-carboxy-5-phosphooxy-5-oxopentan-1-yl)-L-glutamine + NADPH + H(+). It carries out the reaction [amino-group carrier protein]-C-terminal-gamma-(L-glutamyl-5-semialdehyde)-L-glutamate + phosphate + NADP(+) = [amino-group carrier protein]-C-terminal-gamma-(5-phospho-L-glutamyl)-L-glutamate + NADPH + H(+). It participates in amino-acid biosynthesis; L-lysine biosynthesis via AAA pathway; L-lysine from L-alpha-aminoadipate (Thermus route): step 3/5. The protein operates within amino-acid biosynthesis; L-arginine biosynthesis. Functionally, involved in both the arginine and lysine biosynthetic pathways. This chain is [LysW]-L-2-aminoadipate/[LysW]-L-glutamate phosphate reductase, found in Sulfolobus acidocaldarius (strain ATCC 33909 / DSM 639 / JCM 8929 / NBRC 15157 / NCIMB 11770).